The primary structure comprises 970 residues: Sodium/calcium exchanger 1 (970 aa).

Residues 1 to 32 (MLQFSLSPTLSMGFHVIAMVALLFSHVDHISA) form the signal peptide. Over 33-71 (ETEMEGEGNETGECTGSYYCKKGVILPIWEPQDPSFGDK) the chain is Extracellular. N-linked (GlcNAc...) asparagine glycosylation is present at N41. Residues 72 to 92 (IARATVYFVAMVYMFLGVSII) traverse the membrane as a helical segment. The Cytoplasmic portion of the chain corresponds to 93–133 (ADRFMSSIEVITSQEKEITIKKPNGETTKTTVRIWNETVSN). The helical transmembrane segment at 134-154 (LTLMALGSSAPEILLSVIEVC) threads the bilayer. One copy of the Alpha-1 repeat lies at 138–178 (ALGSSAPEILLSVIEVCGHNFTAGDLGPSTIVGSAAFNMFI). At 155–167 (GHNFTAGDLGPST) the chain is on the extracellular side. Residue N157 is glycosylated (N-linked (GlcNAc...) asparagine). The helical transmembrane segment at 168 to 188 (IVGSAAFNMFIIIALCVYVVP) threads the bilayer. Residues 189–201 (DGETRKIKHLRVF) lie on the Cytoplasmic side of the membrane. The helical transmembrane segment at 202–222 (FVTAAWSIFAYTWLYIILSVS) threads the bilayer. Residues 223 to 228 (SPGVVE) lie on the Extracellular side of the membrane. A helical transmembrane segment spans residues 229-249 (VWEGLLTFFFFPICVVFAWVA). Over 250–797 (DRRLLFYKYV…FVPPTEYWNG (548 aa)) the chain is Cytoplasmic. The putative calmodulin-binding region stretch occupies residues 251–270 (RRLLFYKYVYKRYRAGKQRG). Phosphoserine is present on residues S282 and S389. Calx-beta domains lie at 393–493 (VNTE…VHLS) and 524–624 (ATVT…LEIG). Residues E417, D453, D478, D479, I481, E483, E486, D530, D531, D532, E548, D584, D610, E611, E612, and E715 each contribute to the Ca(2+) site. A helical transmembrane segment spans residues 798 to 818 (WACFIVSILMIGLLTAFIGDL). The Extracellular segment spans residues 819–821 (ASH). The chain crosses the membrane as a helical span at residues 822–842 (FACTIALKDSVTAVVFVALGT). An Alpha-2 repeat occupies 839–875 (ALGTSVPDTFASKVAATQDQYADASIGNVTGSNAVNV). At 843 to 871 (SVPDTFASKVAATQDQYADASIGNVTGSN) the chain is on the cytoplasmic side. The helical transmembrane segment at 872–892 (AVNVFLGIGVAWSIAAIYHAA) threads the bilayer. Topologically, residues 893–903 (NGEQFKVSPGT) are extracellular. Residues 904–924 (LAFSVTLFTIFAFINVGVLLY) form a helical membrane-spanning segment. Residues 925-941 (RRRPEIGGELGGPRTAK) are Cytoplasmic-facing. Residues 942 to 962 (LLTSCLFVLLWLLYIFFSSLE) form a helical membrane-spanning segment. Residues 963-970 (AYCHIKGF) are Extracellular-facing.

The protein belongs to the Ca(2+):cation antiporter (CaCA) (TC 2.A.19) family. SLC8 subfamily.

It is found in the cell membrane. It carries out the reaction Ca(2+)(in) + 3 Na(+)(out) = Ca(2+)(out) + 3 Na(+)(in). Its activity is regulated as follows. Activated by micromolar levels of Ca(2+). Its function is as follows. Mediates the exchange of one Ca(2+) ion against three to four Na(+) ions across the cell membrane, and thereby contributes to the regulation of cytoplasmic Ca(2+) levels and Ca(2+)-dependent cellular processes. Contributes to Ca(2+) transport during excitation-contraction coupling in muscle. In a first phase, voltage-gated channels mediate the rapid increase of cytoplasmic Ca(2+) levels due to release of Ca(2+) stores from the endoplasmic reticulum. SLC8A1 mediates the export of Ca(2+) from the cell during the next phase, so that cytoplasmic Ca(2+) levels rapidly return to baseline. Required for normal embryonic heart development and the onset of heart contractions. The sequence is that of Sodium/calcium exchanger 1 (SLC8A1) from Bos taurus (Bovine).